Here is a 219-residue protein sequence, read N- to C-terminus: Cytochrome b6 (219 aa).

Residues 32 to 52 form a helical membrane-spanning segment; the sequence is IFYCFGGIVLTCFIIQAATGF. Position 35 (cysteine 35) interacts with heme c. Heme b contacts are provided by histidine 86 and histidine 100. 3 helical membrane passes run 90–110, 116–136, and 190–210; these read SGLM…TAGF, LTWI…VTGY, and AHTF…FLMI. Residues histidine 191 and histidine 206 each contribute to the heme b site.

The protein belongs to the cytochrome b family. PetB subfamily. The 4 large subunits of the cytochrome b6-f complex are cytochrome b6, subunit IV (17 kDa polypeptide, PetD), cytochrome f and the Rieske protein, while the 4 small subunits are PetG, PetL, PetM and PetN. The complex functions as a dimer. Heme b is required as a cofactor. The cofactor is heme c.

It localises to the plastid. The protein resides in the chloroplast thylakoid membrane. In terms of biological role, component of the cytochrome b6-f complex, which mediates electron transfer between photosystem II (PSII) and photosystem I (PSI), cyclic electron flow around PSI, and state transitions. The chain is Cytochrome b6 from Amphidinium operculatum (Dinoflagellate).